A 143-amino-acid chain; its full sequence is Histone H2B.2, sperm (143 aa).

Residues 1–49 (MPKSPSKSSPRKGSPRKGSPRKGSPKRGGKGAKRAGKGGRRNVVKRRRR) form a disordered region. 5 consecutive short sequence motifs (SPKK motif) follow at residues 4 to 7 (SPSK), 9 to 12 (SPRK), 14 to 17 (SPRK), 19 to 22 (SPRK), and 24 to 27 (SPKR). Positions 9–49 (SPRKGSPRKGSPRKGSPKRGGKGAKRAGKGGRRNVVKRRRR) are enriched in basic residues. 3 positions are modified to phosphoserine: serine 14, serine 19, and serine 24. The O-linked (GlcNAc) serine glycan is linked to serine 129. Lysine 137 participates in a covalent cross-link: Glycyl lysine isopeptide (Lys-Gly) (interchain with G-Cter in ubiquitin).

Belongs to the histone H2B family. As to quaternary structure, the nucleosome is a histone octamer containing two molecules each of H2A, H2B, H3 and H4 assembled in one H3-H4 heterotetramer and two H2A-H2B heterodimers. The octamer wraps approximately 147 bp of DNA. Post-translationally, monoubiquitination of Lys-137 gives a specific tag for epigenetic transcriptional activation and is also prerequisite for histone H3 'Lys-4' and 'Lys-79' methylation. In terms of processing, phosphorylated on SPKK motifs 3, 4 and 5; which may regulate DNA binding. Dephosphorylated during maturation of spermatids to mature sperm and rephosphorylated at fertilization. GlcNAcylation at Ser-129 promotes monoubiquitination of Lys-137. It fluctuates in response to extracellular glucose, and associates with transcribed genes.

The protein resides in the nucleus. Its subcellular location is the chromosome. Its function is as follows. Core component of nucleosome. Nucleosomes wrap and compact DNA into chromatin, limiting DNA accessibility to the cellular machineries which require DNA as a template. Histones thereby play a central role in transcription regulation, DNA repair, DNA replication and chromosomal stability. DNA accessibility is regulated via a complex set of post-translational modifications of histones, also called histone code, and nucleosome remodeling. This chain is Histone H2B.2, sperm, found in Psammechinus miliaris (Green sea urchin).